Here is a 151-residue protein sequence, read N- to C-terminus: 3-hydroxyacyl-[acyl-carrier-protein] dehydratase FabZ (151 aa).

H57 is a catalytic residue.

Belongs to the thioester dehydratase family. FabZ subfamily.

The protein resides in the cytoplasm. The enzyme catalyses a (3R)-hydroxyacyl-[ACP] = a (2E)-enoyl-[ACP] + H2O. Functionally, involved in unsaturated fatty acids biosynthesis. Catalyzes the dehydration of short chain beta-hydroxyacyl-ACPs and long chain saturated and unsaturated beta-hydroxyacyl-ACPs. The protein is 3-hydroxyacyl-[acyl-carrier-protein] dehydratase FabZ of Tolumonas auensis (strain DSM 9187 / NBRC 110442 / TA 4).